A 188-amino-acid chain; its full sequence is Elongation factor P (188 aa).

The disordered stretch occupies residues 139–163; that stretch reads PVTKGQTASSSYKPATLSNGVRTQV. Over residues 142-160 the composition is skewed to polar residues; sequence KGQTASSSYKPATLSNGVR.

The protein belongs to the elongation factor P family.

It localises to the cytoplasm. It functions in the pathway protein biosynthesis; polypeptide chain elongation. Involved in peptide bond synthesis. Stimulates efficient translation and peptide-bond synthesis on native or reconstituted 70S ribosomes in vitro. Probably functions indirectly by altering the affinity of the ribosome for aminoacyl-tRNA, thus increasing their reactivity as acceptors for peptidyl transferase. The chain is Elongation factor P from Methylobacterium nodulans (strain LMG 21967 / CNCM I-2342 / ORS 2060).